The sequence spans 151 residues: 3-hydroxyacyl-[acyl-carrier-protein] dehydratase FabZ (151 aa).

The active site involves His54.

Belongs to the thioester dehydratase family. FabZ subfamily.

It localises to the cytoplasm. It carries out the reaction a (3R)-hydroxyacyl-[ACP] = a (2E)-enoyl-[ACP] + H2O. Involved in unsaturated fatty acids biosynthesis. Catalyzes the dehydration of short chain beta-hydroxyacyl-ACPs and long chain saturated and unsaturated beta-hydroxyacyl-ACPs. The polypeptide is 3-hydroxyacyl-[acyl-carrier-protein] dehydratase FabZ (Blochmanniella pennsylvanica (strain BPEN)).